The chain runs to 455 residues: Regulatory protein LuxO (455 aa).

The Response regulatory domain occupies 1–112 (MVEDTASVAA…RLRVTVNNAI (112 aa)). 4-aspartylphosphate is present on Asp47. Positions 132–361 (FIGSSQTMQA…LQNVLRNVVV (230 aa)) constitute a Sigma-54 factor interaction domain. ATP is bound by residues 160-167 (GESGTGKE) and 223-232 (ADGGTLFLDE).

Functionally, involved in the regulation of different processes depending on the cell density. Acts together with sigma-54 to repress, perhaps indirectly, some genes. This chain is Regulatory protein LuxO (luxO), found in Vibrio cholerae serotype O1 (strain ATCC 39315 / El Tor Inaba N16961).